We begin with the raw amino-acid sequence, 550 residues long: Hydroxylamine reductase (550 aa).

Residues cysteine 3, cysteine 6, cysteine 18, and cysteine 25 each coordinate [2Fe-2S] cluster. The hybrid [4Fe-2O-2S] cluster site is built by histidine 249, glutamate 273, cysteine 317, cysteine 405, cysteine 433, cysteine 458, glutamate 492, and lysine 494. At cysteine 405 the chain carries Cysteine persulfide.

It belongs to the HCP family. [2Fe-2S] cluster serves as cofactor. Hybrid [4Fe-2O-2S] cluster is required as a cofactor.

It is found in the cytoplasm. It carries out the reaction A + NH4(+) + H2O = hydroxylamine + AH2 + H(+). Functionally, catalyzes the reduction of hydroxylamine to form NH(3) and H(2)O. The chain is Hydroxylamine reductase from Escherichia coli (strain SMS-3-5 / SECEC).